The primary structure comprises 131 residues: PDZ domain-containing protein C52A11.3 (131 aa).

One can recognise a PDZ domain in the interval 51–127 (LVKLQKDANR…RLYLQIARPH (77 aa)).

The polypeptide is PDZ domain-containing protein C52A11.3 (Caenorhabditis elegans).